The chain runs to 119 residues: MLSNIIPLSIGAALGATARWLLNLAVPASLSPATGNLFANWTGAFLIGIFAETVNHPQWKLLLITGFLGSLTTLSGFSLETVTLLQSNRPASALANIFLHTAGSLLLTWLGLKIGTAVK.

The next 4 membrane-spanning stretches (helical) occupy residues 5-25 (IIPL…LNLA), 30-50 (LSPA…IGIF), 59-79 (WKLL…GFSL), and 92-112 (SALA…WLGL). Glycine 69 and threonine 72 together coordinate Na(+).

The protein belongs to the fluoride channel Fluc/FEX (TC 1.A.43) family.

Its subcellular location is the cell inner membrane. It catalyses the reaction fluoride(in) = fluoride(out). Na(+) is not transported, but it plays an essential structural role and its presence is essential for fluoride channel function. In terms of biological role, fluoride-specific ion channel. Important for reducing fluoride concentration in the cell, thus reducing its toxicity. The polypeptide is Fluoride-specific ion channel FluC (Neisseria meningitidis serogroup A / serotype 4A (strain DSM 15465 / Z2491)).